Reading from the N-terminus, the 155-residue chain is Small ribosomal subunit protein uS7 (155 aa).

The protein belongs to the universal ribosomal protein uS7 family. Part of the 30S ribosomal subunit. Contacts proteins S9 and S11.

Its function is as follows. One of the primary rRNA binding proteins, it binds directly to 16S rRNA where it nucleates assembly of the head domain of the 30S subunit. Is located at the subunit interface close to the decoding center, probably blocks exit of the E-site tRNA. This Xylella fastidiosa (strain M23) protein is Small ribosomal subunit protein uS7.